The following is a 340-amino-acid chain: UDP-N-acetylglucosamine--N-acetylmuramyl-(pentapeptide) pyrophosphoryl-undecaprenol N-acetylglucosamine transferase (340 aa).

UDP-N-acetyl-alpha-D-glucosamine contacts are provided by residues 10-12 (TGG), asparagine 110, serine 171, and glutamine 272.

It belongs to the glycosyltransferase 28 family. MurG subfamily.

Its subcellular location is the cell membrane. The enzyme catalyses di-trans,octa-cis-undecaprenyl diphospho-N-acetyl-alpha-D-muramoyl-L-alanyl-D-glutamyl-meso-2,6-diaminopimeloyl-D-alanyl-D-alanine + UDP-N-acetyl-alpha-D-glucosamine = di-trans,octa-cis-undecaprenyl diphospho-[N-acetyl-alpha-D-glucosaminyl-(1-&gt;4)]-N-acetyl-alpha-D-muramoyl-L-alanyl-D-glutamyl-meso-2,6-diaminopimeloyl-D-alanyl-D-alanine + UDP + H(+). It participates in cell wall biogenesis; peptidoglycan biosynthesis. In terms of biological role, cell wall formation. Catalyzes the transfer of a GlcNAc subunit on undecaprenyl-pyrophosphoryl-MurNAc-pentapeptide (lipid intermediate I) to form undecaprenyl-pyrophosphoryl-MurNAc-(pentapeptide)GlcNAc (lipid intermediate II). The chain is UDP-N-acetylglucosamine--N-acetylmuramyl-(pentapeptide) pyrophosphoryl-undecaprenol N-acetylglucosamine transferase from Wolbachia pipientis subsp. Culex pipiens (strain wPip).